A 299-amino-acid polypeptide reads, in one-letter code: Recombination-associated protein RdgC (299 aa).

Belongs to the RdgC family.

The protein resides in the cytoplasm. The protein localises to the nucleoid. In terms of biological role, may be involved in recombination. The protein is Recombination-associated protein RdgC of Laribacter hongkongensis (strain HLHK9).